The sequence spans 69 residues: Large ribosomal subunit protein eL38z/eL38y (69 aa).

Belongs to the eukaryotic ribosomal protein eL38 family.

This is Large ribosomal subunit protein eL38z/eL38y (RPL38A) from Arabidopsis thaliana (Mouse-ear cress).